Here is a 1111-residue protein sequence, read N- to C-terminus: Probable arabinosyltransferase A (1111 aa).

The next 13 helical transmembrane spans lie at 12-34 (IIRL…VPLL), 205-224 (IAVG…LSAL), 333-355 (VWMR…HWVL), 370-387 (VAVL…LPFN), 394-413 (PLIA…AIAL), 423-445 (AVVA…ALLT), 462-484 (GLLA…VFHS), 530-547 (FPVL…VVLL), 554-576 (GLAS…LLTF), 581-603 (WAIQ…AFAF), 615-637 (TVYI…GWFG), 652-674 (IAGH…LAGG), and 695-717 (FLAT…GSLA). A disordered region spans residues 804-831 (GLVNSDASPNKPNVTFSDSAGTAGGKGP). Positions 808 to 823 (SDASPNKPNVTFSDSA) are enriched in polar residues.

Belongs to the emb family.

It is found in the cell membrane. Arabinosyl transferase responsible for the polymerization of arabinose into the arabinan of arabinogalactan. This chain is Probable arabinosyltransferase A (embA), found in Mycobacterium leprae (strain TN).